The following is a 125-amino-acid chain: Large ribosomal subunit protein bL17 (125 aa).

The protein belongs to the bacterial ribosomal protein bL17 family. As to quaternary structure, part of the 50S ribosomal subunit. Contacts protein L32.

The sequence is that of Large ribosomal subunit protein bL17 from Syntrophus aciditrophicus (strain SB).